The following is a 1214-amino-acid chain: Reverse gyrase (1214 aa).

The segment at 1–37 adopts an RG N-terminal-type zinc-finger fold; the sequence is MKAIYRDMCPNCRGAITDERLAAKNPCDACLDEPISM. Residues Cys-9, Cys-12, Cys-27, and Cys-30 each coordinate Zn(2+). ATP is bound by residues Gln-89 and 106 to 113; that span reads APTGMGKS. The region spanning 93–252 is the Helicase ATP-binding domain; that stretch reads VKRIIKGKSF…WEIIKLKKQL (160 aa). The DEAD box signature appears at 213-216; it reads DDVD. Residues 635–1214 are topoisomerase I; that stretch reads DLVKSALMIV…YEEILRYVKS (580 aa). Residues 639–802 enclose the Toprim domain; it reads SALMIVESPN…VIKRIEFHEV (164 aa). Glu-645 contributes to the Mg(2+) binding site. The segment at 719–748 adopts an RG C-terminal-type zinc-finger fold; it reads IKRCRDCGHQFVDWEEKGVCPRCGSRNVYD. Positions 722, 725, 738, and 741 each coordinate Zn(2+). Position 771 (Asp-771) interacts with Mg(2+). Residues 818-1212 form the Topo IA-type catalytic domain; the sequence is NEDRVNAQLV…ELYEEILRYV (395 aa). Residue Tyr-955 is the O-(5'-phospho-DNA)-tyrosine intermediate of the active site.

This sequence in the N-terminal section; belongs to the DEAD box helicase family. DDVD subfamily. It in the C-terminal section; belongs to the type IA topoisomerase family. In terms of assembly, monomer. It depends on Zn(2+) as a cofactor. Mg(2+) is required as a cofactor.

It is found in the cytoplasm. It catalyses the reaction ATP + H2O = ADP + phosphate + H(+). Its function is as follows. Modifies the topological state of DNA by introducing positive supercoils in an ATP-dependent process. Increases the linking number in steps of +1. Binds to single-stranded DNA, transiently cleaves and then rejoins the ends, introducing a positive supercoil in the process. The scissile phosphodiester is attacked by the catalytic tyrosine of the enzyme, resulting in the formation of a DNA-(5'-phosphotyrosyl)-enzyme intermediate. Probably involved in rewinding DNA strands in regions of the chromosome that have opened up to allow replication, transcription, DNA repair and/or for DNA protection. The sequence is that of Reverse gyrase from Pyrococcus furiosus (strain ATCC 43587 / DSM 3638 / JCM 8422 / Vc1).